The chain runs to 145 residues: MKVLVKQLMSKSLFTINLDTTLDVALKSLNANSIHRLPVVDNDGNLKGIITDRDLRLATDSPFLPENNEDRLEKLRLHKVSSIMKQNPVTIEDFSPVVEAAKLMRVTNVGGLPVLDKKGRLIGMVTRSDLLDLLIKVLEPVPPQS.

2 CBS domains span residues 9–66 and 84–141; these read MSKS…FLPE and MKQN…LEPV.

The polypeptide is CBS domain-containing protein DDB_G0289609 (Dictyostelium discoideum (Social amoeba)).